The primary structure comprises 226 residues: Cytidylate kinase (226 aa).

10 to 18 (GPAGAGKST) lines the ATP pocket.

This sequence belongs to the cytidylate kinase family. Type 1 subfamily.

It is found in the cytoplasm. It catalyses the reaction CMP + ATP = CDP + ADP. The catalysed reaction is dCMP + ATP = dCDP + ADP. The chain is Cytidylate kinase from Caldicellulosiruptor bescii (strain ATCC BAA-1888 / DSM 6725 / KCTC 15123 / Z-1320) (Anaerocellum thermophilum).